Reading from the N-terminus, the 143-residue chain is Ninjurin-2 (143 aa).

At 1 to 61 (MESDRETIHL…KSVLQQGPFA (61 aa)) the chain is on the extracellular side. Positions 26-38 (NFYATKKSVAESM) are helix alpha1. The tract at residues 39 to 58 (LDVALFMSNAMRLKSVLQQG) is helix alpha2. Residues 62-93 (EYYTTLVTLIIVSLLLQVVISLLLVFIAILNL) form a helical membrane-spanning segment. The Cytoplasmic portion of the chain corresponds to 94–97 (NEVE). Residues 98–127 (NQRHLNKLNNAATILVFITVVINIFITAFG) traverse the membrane as a helical segment. Cholesterol is bound at residue Lys104. Residues 128 to 143 (AHHAASMAARTSSNPI) are Extracellular-facing.

The protein belongs to the ninjurin family. Homooligomer; in response to stimuli, homooligomerizes into filaments. In contrast to NINJ1, the filament is curved toward the intracellular space, preventing its circularization on a relatively flat membrane to mediate plasma membrane rupture: curvature is caused by cholesterol-binding at the cytoplasmic leaflet.

The protein resides in the cell membrane. In terms of biological role, its role in unclear. In contrast to NINJ1 paralog, does not mediate plasma membrane rupture (cytolysis) downstream of necroptotic and pyroptotic programmed cell death. While it is able to oligomerize and form filaments, filaments are curved toward the intracellular space, preventing circularization to mediate plasma membrane rupture. May act as a homophilic transmembrane adhesion molecule involved in nerve regeneration. Promotes axonal growth. The chain is Ninjurin-2 (Ninj2) from Mus musculus (Mouse).